The chain runs to 172 residues: RNA silencing suppressor p19 (172 aa).

Positions 1-20 are enriched in basic and acidic residues; it reads MERAIQGNDTREQANGERWD. Residues 1–27 are disordered; it reads MERAIQGNDTREQANGERWDGGSGGIT.

Belongs to the tombusvirus protein p19 family. Homodimer.

Acts as a suppressor of RNA-mediated gene silencing, also known as post-transcriptional gene silencing (PTGS), a mechanism of plant viral defense that limits the accumulation of viral RNAs. Binds to short interfering RNAs (siRNAs) with high affinity. Acts as a molecular caliper to specifically select siRNAs based on the length of the duplex region of the RNA. This Dianthus caryophyllus (Carnation) protein is RNA silencing suppressor p19.